A 532-amino-acid chain; its full sequence is Amidophosphoribosyltransferase 3, chloroplastic (532 aa).

A chloroplast-targeting transit peptide spans 1 to 59 (MAFSVEEISSILPNSLSANPRNVSQNTISPSFFKPSLKPYASKTLISLSCRRSLSPVFS). Cys-77 (nucleophile) is an active-site residue. The Glutamine amidotransferase type-2 domain occupies 77 to 296 (CGVVGIHGDP…PGEIVVVDRN (220 aa)). [4Fe-4S] cluster-binding residues include Cys-313, Cys-459, Cys-511, and Cys-514.

The protein in the C-terminal section; belongs to the purine/pyrimidine phosphoribosyltransferase family. [4Fe-4S] cluster is required as a cofactor. The cofactor is Mg(2+). As to expression, mostly expressed at low levels in leaves, and, to a lower extent, in cotyledons.

The protein localises to the plastid. The protein resides in the chloroplast stroma. The catalysed reaction is 5-phospho-beta-D-ribosylamine + L-glutamate + diphosphate = 5-phospho-alpha-D-ribose 1-diphosphate + L-glutamine + H2O. It functions in the pathway purine metabolism; IMP biosynthesis via de novo pathway; N(1)-(5-phospho-D-ribosyl)glycinamide from 5-phospho-alpha-D-ribose 1-diphosphate: step 1/2. With respect to regulation, inhibited by the phenyltriazole acetic acid compound [5-(4-chlorophenyl)-1-isopropyl-1H-[1,2,4]triazol-3-yl]-acetic acid (DAS734), a bleaching herbicide. Repressed by AMP, ADP, ATP and GTP, and slightly by GMP. Catalyzes the first committed step of 'de novo' purine biosynthesis from glutamine. The sequence is that of Amidophosphoribosyltransferase 3, chloroplastic (ASE3) from Arabidopsis thaliana (Mouse-ear cress).